The following is a 1183-amino-acid chain: 3-hydroxy-3-methylglutaryl-coenzyme A reductase (1183 aa).

Residues 1–245 (MAAILLPQRF…DLLKNAETLD (245 aa)) are Cytoplasmic-facing. One can recognise an SSD domain in the interval 245-426 (DIVIMLLGYI…FTFYTAILSI (182 aa)). Residues 246–266 (IVIMLLGYIAMHLTFVSLFLS) form a helical membrane-spanning segment. Residues 267–273 (MRKMGSK) lie on the Lumenal side of the membrane. The chain crosses the membrane as a helical span at residues 274–294 (FWLGICTLFSSVFAFLFGLVV). Over 295–299 (TTKLG) the chain is Cytoplasmic. A helical membrane pass occupies residues 300 to 320 (VPISVILLSEGLPFLVVTIGF). The Lumenal segment spans residues 321–378 (EKNIVLTRAVMSHAIEHRRIQAQNSKSGKRSPERSTQNMIQYAVQAAIKEKGFEIIRD). The helical transmembrane segment at 379 to 399 (YAIEIVILVIGAASGVQGGLQ) threads the bilayer. Topologically, residues 400 to 402 (QFC) are cytoplasmic. A helical membrane pass occupies residues 403 to 423 (FLAAWTLFFDFILLFTFYTAI). Residues 424 to 482 (LSIKLEINRIKRHVDMRMALEDDGVSRRVAENVAKGDDELNRVRGDAPLFGRKSSSIPK) are Lumenal-facing. A helical transmembrane segment spans residues 483–503 (FKVLMILGFIFVNIVNICSIP). The Cytoplasmic segment spans residues 504–1183 (FRNPSSMSTI…SAAAIQRSKR (680 aa)). Residue Glu-828 is the Charge relay system of the active site. Residue 834 to 840 (SASRGCK) participates in CoA binding. Residues 895 to 897 (SRF) and 922 to 930 (DAMGMNMIS) contribute to the NADP(+) site. Lys-962 serves as the catalytic Charge relay system. 991-993 (VLK) lines the CoA pocket. Asp-1038 serves as the catalytic Charge relay system. Residue 1133–1134 (AH) coordinates CoA. Residue His-1134 is the Proton donor of the active site. The disordered stretch occupies residues 1136-1183 (QHNRSAAPSRSTTPAPPMTPVSLAMTSAQERSASTTSMSAAAIQRSKR). 1138 to 1139 (NR) contributes to the NADP(+) binding site. Low complexity-rich tracts occupy residues 1139 to 1148 (RSAAPSRSTT) and 1167 to 1177 (SASTTSMSAAA).

This sequence belongs to the HMG-CoA reductase family.

Its subcellular location is the endoplasmic reticulum membrane. The catalysed reaction is (R)-mevalonate + 2 NADP(+) + CoA = (3S)-3-hydroxy-3-methylglutaryl-CoA + 2 NADPH + 2 H(+). It participates in metabolic intermediate biosynthesis; (R)-mevalonate biosynthesis; (R)-mevalonate from acetyl-CoA: step 3/3. HMG-CoA reductase; part of the first module of ergosterol biosynthesis pathway that includes the early steps of the pathway, conserved across all eukaryotes, and which results in the formation of mevalonate from acetyl-coenzyme A (acetyl-CoA). In this module, the cytosolic acetyl-CoA acetyltransferase catalyzes the formation of acetoacetyl-CoA. The hydroxymethylglutaryl-CoA synthase then condenses acetyl-CoA with acetoacetyl-CoA to form HMG-CoA. The rate-limiting step of the early module is the reduction to mevalonate by the 3-hydroxy-3-methylglutaryl-coenzyme A (HMG-CoA) reductase HMGR. This chain is 3-hydroxy-3-methylglutaryl-coenzyme A reductase (HMGR), found in Gibberella fujikuroi (strain CBS 195.34 / IMI 58289 / NRRL A-6831) (Bakanae and foot rot disease fungus).